Reading from the N-terminus, the 168-residue chain is Chemoreceptor glutamine deamidase CheD (168 aa).

The protein belongs to the CheD family. In terms of assembly, forms a complex with CheC.

It carries out the reaction L-glutaminyl-[protein] + H2O = L-glutamyl-[protein] + NH4(+). Deamidates glutamine residues to glutamate on methyl-accepting chemotaxis receptors (MCPs). CheD-mediated MCP deamidation is required for productive communication of the conformational signals of the chemoreceptors to the CheA kinase. The sequence is that of Chemoreceptor glutamine deamidase CheD from Bacillus licheniformis (strain ATCC 14580 / DSM 13 / JCM 2505 / CCUG 7422 / NBRC 12200 / NCIMB 9375 / NCTC 10341 / NRRL NRS-1264 / Gibson 46).